The chain runs to 383 residues: Protein COS7 (383 aa).

At 1 to 42 the chain is on the cytoplasmic side; it reads MKENEVKDEKSVDVLSFKQLESQKIVLPQDLFRSSFTWFCYE. Residues 43–63 form a helical membrane-spanning segment; the sequence is IYKSLAFRIWMLLWLPLSVWW. The Extracellular segment spans residues 64–72; the sequence is KLSNNCIYP. The helical transmembrane segment at 73-93 threads the bilayer; the sequence is LIVSLLVLFLGPIFVLVICGL. The Cytoplasmic portion of the chain corresponds to 94–232; that stretch reads SRKRSLSKQL…RSKLTWFLKR (139 aa). A helical membrane pass occupies residues 233 to 253; the sequence is IFTIYSLPLWLAFLNCICVSQ. His-254 is a topological domain (extracellular). A helical transmembrane segment spans residues 255-275; that stretch reads FCLAFRILCPGLFFLMMVWLF. The Cytoplasmic segment spans residues 276 to 383; it reads QNMRTTALLV…SRNEESLMKK (108 aa).

Belongs to the DUP/COS family.

Its subcellular location is the membrane. The protein is Protein COS7 (COS7) of Saccharomyces cerevisiae (strain ATCC 204508 / S288c) (Baker's yeast).